The chain runs to 258 residues: Trypsin (258 aa).

Residues 1–16 form the signal peptide; sequence MIRFTLALAVIGVTFA. Residues 17–29 constitute a propeptide, activation peptide; that stretch reads ASTPQIETNPNLE. The region spanning 30–257 is the Peptidase S1 domain; that stretch reads IIGGHDANII…FRDWINEETE (228 aa). Cys55 and Cys71 are joined by a disulfide. Residue His70 is the Charge relay system of the active site. Residue Asn110 is glycosylated (N-linked (GlcNAc...) asparagine). The active-site Charge relay system is the Asp117. Asn130 and Asn188 each carry an N-linked (GlcNAc...) asparagine glycan. 2 cysteine pairs are disulfide-bonded: Cys182-Cys197 and Cys209-Cys233. The active-site Charge relay system is the Ser213.

Belongs to the peptidase S1 family. In terms of tissue distribution, expressed in larval carcasses and gut, and adult gut.

Its subcellular location is the secreted. It catalyses the reaction Preferential cleavage: Arg-|-Xaa, Lys-|-Xaa.. The protein is Trypsin of Phaedon cochleariae (Mustard beetle).